The sequence spans 131 residues: MAGRGKQLGSGAAKKSTSRSSKAGLQFPVGRIARFLKAGKYAERVGAGAPVYLAAVLEYLAAEVLELAGNAARDNKKTRIVPRHIQLAVRNDEELSKLLGDVTIANGGVMPNIHNLLLPKKAGSSKPTEED.

The tract at residues 1–23 is disordered; the sequence is MAGRGKQLGSGAAKKSTSRSSKA. Residues 9–23 are compositionally biased toward low complexity; the sequence is GSGAAKKSTSRSSKA.

It belongs to the histone H2A family. In terms of assembly, the nucleosome is a histone octamer containing two molecules each of H2A, H2B, H3 and H4 assembled in one H3-H4 heterotetramer and two H2A-H2B heterodimers. The octamer wraps approximately 147 bp of DNA. Not ubiquitinated. Expressed in meristems and dividing cells.

It is found in the nucleus. Its subcellular location is the chromosome. Core component of nucleosome. Nucleosomes wrap and compact DNA into chromatin, limiting DNA accessibility to the cellular machineries which require DNA as a template. Histones thereby play a central role in transcription regulation, DNA repair, DNA replication and chromosomal stability. DNA accessibility is regulated via a complex set of post-translational modifications of histones, also called histone code, and nucleosome remodeling. This is Probable histone H2A.3 from Arabidopsis thaliana (Mouse-ear cress).